Here is a 235-residue protein sequence, read N- to C-terminus: Segregation and condensation protein A (235 aa).

The protein belongs to the ScpA family. Component of a cohesin-like complex composed of ScpA, ScpB and the Smc homodimer, in which ScpA and ScpB bind to the head domain of Smc. The presence of the three proteins is required for the association of the complex with DNA.

Its subcellular location is the cytoplasm. Functionally, participates in chromosomal partition during cell division. May act via the formation of a condensin-like complex containing Smc and ScpB that pull DNA away from mid-cell into both cell halves. The chain is Segregation and condensation protein A from Streptococcus equi subsp. equi (strain 4047).